We begin with the raw amino-acid sequence, 199 residues long: Outer-membrane lipoprotein LolB (199 aa).

An N-terminal signal peptide occupies residues 1-28 (MAAAGSLCQTAWRVRGWLAAGLCALLAG). Residue cysteine 29 is the site of N-palmitoyl cysteine attachment. Residue cysteine 29 is the site of S-diacylglycerol cysteine attachment.

This sequence belongs to the LolB family. As to quaternary structure, monomer.

Its subcellular location is the cell outer membrane. Plays a critical role in the incorporation of lipoproteins in the outer membrane after they are released by the LolA protein. The protein is Outer-membrane lipoprotein LolB of Bordetella petrii (strain ATCC BAA-461 / DSM 12804 / CCUG 43448).